We begin with the raw amino-acid sequence, 396 residues long: MSGEKKSRHVMYKKTSRDKAVSVYLGKRDYVDHVDSVEPVDGVVLVDPDLLKGKKVYVTLTCAFRYGQEDIDVIGLTFRKDLYYARTQIYPPVEDPKALTKVQERLMKKLGNNAFPFVLEFPDFLPCSVSLQPAPSDVGKACGVDFEIKAFSTNNLEDRIHKKNSVRLMIRKIQYAPDQPGPKPRAETSWQFFMSDKPLHLTASLSKEVFYHGEPITVSVSVTNKSDKTVKKISASVEQVSNVVLYSSDYYIKTVALEESNEKVPSKASYNHTFSLLPLLAYNREKREIALDGKLKHEDTNLASSTLLKEGTDRTVMGILVDYKIKVTLTVSGLLGDMTSSEVSTELPFILMHPNPDGGAKESEQEDDMVFEEFARDPLKGELQAEEKEEEEDDEK.

Over residues alanine 375–glutamate 386 the composition is skewed to basic and acidic residues. The tract at residues alanine 375–lysine 396 is disordered. The segment covering glutamate 387 to lysine 396 has biased composition (acidic residues).

It belongs to the arrestin family. Interacts with RHO (via the phosphorylated C-terminus).

The protein localises to the cell projection. Its subcellular location is the cilium. It is found in the photoreceptor outer segment. It localises to the membrane. In terms of biological role, binds to photoactivated, phosphorylated RHO and terminates RHO signaling via G-proteins by competing with G-proteins for the same binding site on RHO. May play a role in preventing light-dependent degeneration of retinal photoreceptor cells. The chain is S-arrestin (sag) from Xenopus laevis (African clawed frog).